Reading from the N-terminus, the 274-residue chain is Cytochrome b-c1 complex subunit Rieske, mitochondrial (274 aa).

The Mitochondrial matrix portion of the chain corresponds to serine 79–serine 103. Residues arginine 104–methionine 140 form a helical membrane-spanning segment. The Mitochondrial intermembrane portion of the chain corresponds to serine 141–glycine 274. The Rieske domain maps to glutamate 187 to isoleucine 272. [2Fe-2S] cluster-binding residues include cysteine 217, histidine 219, cysteine 236, histidine 239, and serine 241. Cysteine 222 and cysteine 238 are oxidised to a cystine.

This sequence belongs to the Rieske iron-sulfur protein family. As to quaternary structure, component of the ubiquinol-cytochrome c oxidoreductase (cytochrome b-c1 complex, complex III, CIII), a multisubunit enzyme composed of 11 subunits. The complex is composed of 3 respiratory subunits cytochrome b, cytochrome c1 and Rieske protein UQCRFS1, 2 core protein subunits UQCRC1/QCR1 and UQCRC2/QCR2, and 6 low-molecular weight protein subunits UQCRH/QCR6, UQCRB/QCR7, UQCRQ/QCR8, UQCR10/QCR9, UQCR11/QCR10 and subunit 9, the cleavage product of Rieske protein UQCRFS1. The complex exists as an obligatory dimer and forms supercomplexes (SCs) in the inner mitochondrial membrane with NADH-ubiquinone oxidoreductase (complex I, CI) and cytochrome c oxidase (complex IV, CIV), resulting in different assemblies (supercomplex SCI(1)III(2)IV(1) and megacomplex MCI(2)III(2)IV(2)). Incorporation of the Rieske protein UQCRFS1 is the penultimate step in complex III assembly. Interacts with TTC19, which is involved in the clearance of UQCRFS1 fragments. In terms of assembly, component of the ubiquinol-cytochrome c oxidoreductase (cytochrome b-c1 complex, complex III, CIII). Subunit 9 corresponds to the mitochondrial targeting sequence (MTS) of Rieske protein UQCRFS1. It is retained after processing and incorporated inside complex III, where it remains bound to the complex and localizes between the 2 core subunits UQCRC1/QCR1 and UQCRC2/QCR2. [2Fe-2S] cluster is required as a cofactor. Proteolytic processing is necessary for the correct insertion of UQCRFS1 in the complex III dimer. Several fragments are generated during UQCRFS1 insertion, most probably due to the endogenous matrix-processing peptidase (MPP) activity of the 2 core protein subunits UQCRC1/QCR1 and UQCRC2/QCR2, which are homologous to the 2 mitochondrial-processing peptidase (MPP) subunits beta-MPP and alpha-MPP respectively. The action of the protease is also necessary for the clearance of the UQCRFS1 fragments.

Its subcellular location is the mitochondrion inner membrane. It catalyses the reaction a quinol + 2 Fe(III)-[cytochrome c](out) = a quinone + 2 Fe(II)-[cytochrome c](out) + 2 H(+)(out). Its function is as follows. Component of the ubiquinol-cytochrome c oxidoreductase, a multisubunit transmembrane complex that is part of the mitochondrial electron transport chain which drives oxidative phosphorylation. The respiratory chain contains 3 multisubunit complexes succinate dehydrogenase (complex II, CII), ubiquinol-cytochrome c oxidoreductase (cytochrome b-c1 complex, complex III, CIII) and cytochrome c oxidase (complex IV, CIV), that cooperate to transfer electrons derived from NADH and succinate to molecular oxygen, creating an electrochemical gradient over the inner membrane that drives transmembrane transport and the ATP synthase. The cytochrome b-c1 complex catalyzes electron transfer from ubiquinol to cytochrome c, linking this redox reaction to translocation of protons across the mitochondrial inner membrane, with protons being carried across the membrane as hydrogens on the quinol. In the process called Q cycle, 2 protons are consumed from the matrix, 4 protons are released into the intermembrane space and 2 electrons are passed to cytochrome c. The Rieske protein is a catalytic core subunit containing a [2Fe-2S] iron-sulfur cluster. It cycles between 2 conformational states during catalysis to transfer electrons from the quinol bound in the Q(0) site in cytochrome b to cytochrome c1. Incorporation of UQCRFS1 is the penultimate step in complex III assembly. In terms of biological role, component of the ubiquinol-cytochrome c oxidoreductase (cytochrome b-c1 complex, complex III, CIII). UQCRFS1 undergoes proteolytic processing once it is incorporated in the complex III dimer. One of the fragments, called subunit 9, corresponds to its mitochondrial targeting sequence (MTS). The proteolytic processing is necessary for the correct insertion of UQCRFS1 in the complex III dimer, but the persistence of UQCRFS1-derived fragments may prevent newly imported UQCRFS1 to be processed and assembled into complex III and is detrimental for the complex III structure and function. The polypeptide is Cytochrome b-c1 complex subunit Rieske, mitochondrial (UQCRFS1) (Pongo pygmaeus (Bornean orangutan)).